The chain runs to 124 residues: UPF0538 protein (124 aa).

It belongs to the UPF0538 family.

This is UPF0538 protein from Dictyostelium discoideum (Social amoeba).